The chain runs to 409 residues: Serine protease inhibitor 2 (409 aa).

The signal sequence occupies residues 1 to 21; that stretch reads MNKLNFVILCLAALLVFDATA. N-linked (GlcNAc...) asparagine glycosylation is found at asparagine 294 and asparagine 324. Residues 356–360 carry the Hinge region; required for binding to peptidase motif; it reads LGSEA.

Belongs to the serpin family. Forms a covalent heterodimer with protease CLIPB9; the interaction inhibits CLIPB9 protease activity. Forms a covalent heterodimer with protease CLIPB10; the interaction inhibits CLIPB10 catalytic activity. Interacts with CLIPB4 in the hemolymph of immune-challenged female mosquitoes; the interaction results in CLIPB4 inhibition. In terms of processing, protease CLIPB9 binds to SRPN2 via the hinge region resulting in the cleavage of the reactive bond. This leads to a conformational change in SRPN2 which traps CLIPB9 and distorts its active site, resulting in CLIPB9 inactivation.

It is found in the secreted. Functionally, serine protease inhibitor that functions in the melanization-mediated immune response. By preventing the activation of phenoloxidases through the inhibiting of serine proteases CLIPB9, CLIPB10 and CLIPB4, negatively regulates melanization in the hemolymph. By preventing melanization, has a detrimental role during P.berghei parasite mediated-infection and invasion of the mosquito midgut. The sequence is that of Serine protease inhibitor 2 from Anopheles gambiae (African malaria mosquito).